The following is a 432-amino-acid chain: Adenylosuccinate synthetase (432 aa).

GTP is bound by residues 13-19 and 41-43; these read GDEGKGK and GHT. The active-site Proton acceptor is Asp14. Residues Asp14 and Gly41 each contribute to the Mg(2+) site. Residues 14 to 17, 39 to 42, Thr130, Arg144, Gln225, Thr240, and Arg304 each bind IMP; these read DEGK and NAGH. Residue His42 is the Proton donor of the active site. Substrate is bound at residue 300–306; the sequence is STTGRPR. Residues Arg306, 332–334, and 416–418 contribute to the GTP site; these read KLD and STG.

This sequence belongs to the adenylosuccinate synthetase family. As to quaternary structure, homodimer. Mg(2+) serves as cofactor.

It localises to the cytoplasm. It carries out the reaction IMP + L-aspartate + GTP = N(6)-(1,2-dicarboxyethyl)-AMP + GDP + phosphate + 2 H(+). It participates in purine metabolism; AMP biosynthesis via de novo pathway; AMP from IMP: step 1/2. In terms of biological role, plays an important role in the de novo pathway of purine nucleotide biosynthesis. Catalyzes the first committed step in the biosynthesis of AMP from IMP. This chain is Adenylosuccinate synthetase, found in Nitrosomonas eutropha (strain DSM 101675 / C91 / Nm57).